The following is a 331-amino-acid chain: Mucin-15 (331 aa).

The signal sequence occupies residues 1-22; that stretch reads MLTLAKIALISSLFISLPFARP. Topologically, residues 23 to 233 are extracellular; that stretch reads QKQNPRRNVT…SDTPKENKNT (211 aa). 12 N-linked (GlcNAc...) asparagine glycosylation sites follow: Asn30, Asn44, Asn54, Asn59, Asn75, Asn84, Asn120, Asn136, Asn145, Asn152, Asn215, and Asn222. Residues 124 to 162 show a composition bias toward polar residues; it reads ADANPLQVSEHSNSTNSPSPENFTWSLDNDTMNSPEDIS. Residues 124–186 form a disordered region; sequence ADANPLQVSE…VTPFTAEPTE (63 aa). The chain crosses the membrane as a helical span at residues 234 to 254; that stretch reads GIVFGAILGAILGASLLSLVG. Residues 255 to 331 lie on the Cytoplasmic side of the membrane; it reads YLLCGQRKTD…DAIPPLRPSI (77 aa). A disordered region spans residues 302-331; sequence AVSDSSMPEGGESLQDGIPMDAIPPLRPSI.

Highly glycosylated (N- and O-linked carbohydrates).

It localises to the membrane. The sequence is that of Mucin-15 (Muc15) from Mus musculus (Mouse).